The primary structure comprises 329 residues: GTPase Obg (329 aa).

In terms of domain architecture, Obg spans 1–159 (MQFIDQARIT…WFLQLELKLL (159 aa)). The region spanning 160–328 (AEVGIIGLPN…LLAQVWKELG (169 aa)) is the OBG-type G domain. ATP is bound by residues 166–173 (GLPNAGKS), 191–195 (FTTLV), 213–216 (DIPG), 280–283 (NKQE), and 309–311 (SAA). The Mg(2+) site is built by Ser173 and Thr193.

Belongs to the TRAFAC class OBG-HflX-like GTPase superfamily. OBG GTPase family. In terms of assembly, monomer. Mg(2+) is required as a cofactor.

The protein resides in the cytoplasm. Its function is as follows. An essential GTPase which binds GTP, GDP and possibly (p)ppGpp with moderate affinity, with high nucleotide exchange rates and a fairly low GTP hydrolysis rate. Plays a role in control of the cell cycle, stress response, ribosome biogenesis and in those bacteria that undergo differentiation, in morphogenesis control. In Prochlorococcus marinus (strain MIT 9303), this protein is GTPase Obg.